The sequence spans 202 residues: LexA repressor (202 aa).

Positions 28 to 48 (RAEIAQRLGFRSPNAAEEHLK) form a DNA-binding region, H-T-H motif. Active-site for autocatalytic cleavage activity residues include Ser-119 and Lys-156.

The protein belongs to the peptidase S24 family. In terms of assembly, homodimer.

It catalyses the reaction Hydrolysis of Ala-|-Gly bond in repressor LexA.. Its function is as follows. Represses a number of genes involved in the response to DNA damage (SOS response), including recA and lexA. Binds to the 16 bp palindromic sequence 5'-CTGTATATATATACAG-3'. In the presence of single-stranded DNA, RecA interacts with LexA causing an autocatalytic cleavage which disrupts the DNA-binding part of LexA, leading to derepression of the SOS regulon and eventually DNA repair. In Klebsiella pneumoniae subsp. pneumoniae (strain ATCC 700721 / MGH 78578), this protein is LexA repressor.